A 309-amino-acid polypeptide reads, in one-letter code: CDK-activating kinase assembly factor MAT1 (309 aa).

The segment at 6 to 50 (CPRCKTTKYRNPSLKLMVNVCGHTLCESCVELLFVRGSGSCQECD) adopts an RING-type zinc-finger fold. The region spanning 142–161 (REQEELEEALEMEKHENEQR) is the UIM domain.

In terms of assembly, associates with CDK7 and cyclin H.

It localises to the nucleus. In terms of biological role, stabilizes the cyclin H-CDK7 complex to form a functional CDK-activating kinase (CAK) enzymatic complex. The sequence is that of CDK-activating kinase assembly factor MAT1 (mnat1) from Xenopus laevis (African clawed frog).